Consider the following 392-residue polypeptide: WD repeat-containing protein GTS1 (392 aa).

WD repeat units follow at residues 81-124 (GHSD…QVSR), 128-167 (GNDQEIFSFSYGGAADNLLAGGCKEQVLLWDWRNSKQVAC), 171-211 (SHMD…NDDD), and 323-368 (GHID…TEIN).

Expressed in germinating seeds, rosettes leaves, flowers and siliques.

Its function is as follows. Involved in the control of plant growth development. Acts as negative regulator of seed germination, cell division in meristematic regions, plant growth and overall biomass accumulation. May function by regulating ribosome activities and biogenesis in plant cells. In Arabidopsis thaliana (Mouse-ear cress), this protein is WD repeat-containing protein GTS1.